A 539-amino-acid polypeptide reads, in one-letter code: Protein PNS1 (539 aa).

Residues 1-38 (MPLNEKYERPPQPPPAYDPNHRPPSSSENSAAANVNDG) are disordered. Residues 1 to 81 (MPLNEKYERP…NDNKPRWNDW (81 aa)) lie on the Cytoplasmic side of the membrane. Positions 25-36 (SSSENSAAANVN) are enriched in low complexity. A helical transmembrane segment spans residues 82–102 (PFTIFFLCTVGGFIAIAAITL). Residues 103–129 (RAWSQTYSSTGSGIYDGVNTGTLNTNA) lie on the Extracellular side of the membrane. Residues 130-150 (AILLVFVCIIALVFSVLGLTL) traverse the membrane as a helical segment. Residues 151–157 (CRIFPKQ) are Cytoplasmic-facing. The chain crosses the membrane as a helical span at residues 158–178 (FIYCGMVINLVASLGTAIMYM). The Extracellular portion of the chain corresponds to 179 to 182 (SLRY). The chain crosses the membrane as a helical span at residues 183–203 (WSAGIVFLVFTFMTAWCYWGM). The Cytoplasmic portion of the chain corresponds to 204–226 (RSRIPLSVAVLKVVVDAMKKCPQ). Residues 227–247 (IFFVSFVGALVASAFGFLFSA) traverse the membrane as a helical segment. At 248–274 (VIVATYIKYDPNSSNGGCDVSGGSCSH) the chain is on the extracellular side. N-linked (GlcNAc...) asparagine glycosylation occurs at Asn259. Residues 275 to 295 (SKLIGVLVVVFFCGYYISEVI) traverse the membrane as a helical segment. Topologically, residues 296–332 (RNVIHCVISGVFGSWYYMSKSDQGMPRWPAFGALKRA) are cytoplasmic. Residues 333–353 (MTYSFGSICFGSLLVALIDLL) traverse the membrane as a helical segment. The Extracellular portion of the chain corresponds to 354 to 371 (RQILQMIRHDVTSSGGGQ). The helical transmembrane segment at 372–392 (IAIQILFMVFDWIIGFLKWLA) threads the bilayer. Topologically, residues 393–436 (EYFNHYAYSFIALYGKPYLRAAKETWYMLREKGMDALINDNLIN) are cytoplasmic. The helical transmembrane segment at 437 to 457 (IALGLFSMFASYMTALFTFLY) threads the bilayer. Residues 458–473 (LRFTSPQYNSNGAYNG) lie on the Extracellular side of the membrane. The chain crosses the membrane as a helical span at residues 474–494 (ALMAFSFVIALQICNIATEAI). Residues 495-539 (RSGTATFFVALGNDPEVFHHSYPHRFDEIFRAYPDVLRKLSHQNV) are Cytoplasmic-facing.

The protein belongs to the CTL (choline transporter-like) family.

It is found in the cell membrane. Probably involved in transport through the plasma membrane. The sequence is that of Protein PNS1 (PNS1) from Saccharomyces cerevisiae (strain ATCC 204508 / S288c) (Baker's yeast).